The following is a 443-amino-acid chain: Tubulin beta chain (443 aa).

Glutamine 11, glutamate 69, serine 138, glycine 142, threonine 143, glycine 144, asparagine 204, and asparagine 226 together coordinate GTP. Position 69 (glutamate 69) interacts with Mg(2+). Positions 424–443 (QYQDATAEEEGEFEEEEGEN) are disordered. The segment covering 429–443 (TAEEEGEFEEEEGEN) has biased composition (acidic residues).

This sequence belongs to the tubulin family. In terms of assembly, dimer of alpha and beta chains. A typical microtubule is a hollow water-filled tube with an outer diameter of 25 nm and an inner diameter of 15 nM. Alpha-beta heterodimers associate head-to-tail to form protofilaments running lengthwise along the microtubule wall with the beta-tubulin subunit facing the microtubule plus end conferring a structural polarity. Microtubules usually have 13 protofilaments but different protofilament numbers can be found in some organisms and specialized cells. Mg(2+) is required as a cofactor.

It is found in the cytoplasm. The protein resides in the cytoskeleton. In terms of biological role, tubulin is the major constituent of microtubules, a cylinder consisting of laterally associated linear protofilaments composed of alpha- and beta-tubulin heterodimers. Microtubules grow by the addition of GTP-tubulin dimers to the microtubule end, where a stabilizing cap forms. Below the cap, tubulin dimers are in GDP-bound state, owing to GTPase activity of alpha-tubulin. In Tetrahymena pyriformis, this protein is Tubulin beta chain (BETA-TT1).